The following is a 612-amino-acid chain: MDLEKLKDYQKHIRNFSIVAHVDHGKSTIADRILELTDTVSKRQLKNQMLDDMPLERQRGITIKMNSVQVKYHANDGEDYIFHLIDTPGHVDFSYEVSRSLAACEGAVLVVDASQGVQAQTLSNTYLALENDLEILPVLNKIDLPSADPDMAKSEIGDMLGLDASDAVEVSGKTGAGIPELLERIVTDISAPTGDLTKPLKALIFDSKYDDYRGVVMSVRIEEGTVKPGDEIMIMNTGKKYEVTEVGVSSPHPVKEDILIAGDVGYITANIKSVRETRVGDTITSAENPTAEALPGYRQIPPMVYSGMYPTDNRDYDDLKEALQKLQLNDASLEFEPETSQALGFGFRCGFLGLLHMDVVQERLEQEFDLDLIMTAPSVDYHAIMPTGEVKLIDNPADLPDAGEYKELQEPYVKAEIMVPNDFVGAVMQLCEGKRGEFQTMDYLDKYRVNVIYEMPLAEIIYDFFDQLKSSTKGYASLDYEIIGYKATNLVKIDILLNKEPIDALSFIAHREEARDRAVQMCSLLKKLIPRQNFQVDIQGAIGSKIISRATIKPYRKDVTWKIHTGDPDRRAKLLEKQKRGKKRMKSVGRVEVPQDAFMAVLRMNDDDINGK.

In terms of domain architecture, tr-type G spans 11 to 193 (KHIRNFSIVA…RIVTDISAPT (183 aa)). GTP-binding positions include 23 to 28 (DHGKST) and 140 to 143 (NKID).

This sequence belongs to the TRAFAC class translation factor GTPase superfamily. Classic translation factor GTPase family. LepA subfamily.

It is found in the cell membrane. It catalyses the reaction GTP + H2O = GDP + phosphate + H(+). Functionally, required for accurate and efficient protein synthesis under certain stress conditions. May act as a fidelity factor of the translation reaction, by catalyzing a one-codon backward translocation of tRNAs on improperly translocated ribosomes. Back-translocation proceeds from a post-translocation (POST) complex to a pre-translocation (PRE) complex, thus giving elongation factor G a second chance to translocate the tRNAs correctly. Binds to ribosomes in a GTP-dependent manner. This is Elongation factor 4 from Lactobacillus delbrueckii subsp. bulgaricus (strain ATCC 11842 / DSM 20081 / BCRC 10696 / JCM 1002 / NBRC 13953 / NCIMB 11778 / NCTC 12712 / WDCM 00102 / Lb 14).